The chain runs to 339 residues: Dihydroorotate dehydrogenase (quinone) (339 aa).

FMN-binding positions include 62–66 (AGMDK) and Thr86. Lys66 is a binding site for substrate. Residue 111–115 (NRMGF) participates in substrate binding. Positions 139 and 172 each coordinate FMN. Residue Asn172 coordinates substrate. Ser175 acts as the Nucleophile in catalysis. Asn177 contributes to the substrate binding site. Residues Lys217 and Thr245 each coordinate FMN. 246–247 (NT) provides a ligand contact to substrate. FMN-binding positions include Gly268, Gly297, and 318–319 (YS).

The protein belongs to the dihydroorotate dehydrogenase family. Type 2 subfamily. In terms of assembly, monomer. FMN serves as cofactor.

The protein resides in the cell membrane. It catalyses the reaction (S)-dihydroorotate + a quinone = orotate + a quinol. It participates in pyrimidine metabolism; UMP biosynthesis via de novo pathway; orotate from (S)-dihydroorotate (quinone route): step 1/1. In terms of biological role, catalyzes the conversion of dihydroorotate to orotate with quinone as electron acceptor. This is Dihydroorotate dehydrogenase (quinone) from Shewanella sp. (strain ANA-3).